Reading from the N-terminus, the 169-residue chain is Peptidyl-prolyl cis-trans isomerase (169 aa).

Residues 5–168 (FFDMTIGGQP…SEVKIAKCGQ (164 aa)) enclose the PPIase cyclophilin-type domain.

Belongs to the cyclophilin-type PPIase family.

The protein localises to the cytoplasm. It catalyses the reaction [protein]-peptidylproline (omega=180) = [protein]-peptidylproline (omega=0). With respect to regulation, binds cyclosporin A (CsA). CsA mediates some of its effects via an inhibitory action on PPIase. PPIases accelerate the folding of proteins. It catalyzes the cis-trans isomerization of proline imidic peptide bonds in oligopeptides. The polypeptide is Peptidyl-prolyl cis-trans isomerase (Unspecified eudicot DB-1992).